We begin with the raw amino-acid sequence, 732 residues long: Non-structural protein 4 (732 aa).

Polar residues-rich tracts occupy residues 13–23 and 31–56; these read KNKGIQQNQWH and LSGQTKAEQGTSSQQAGVNQGENSKS. Disordered regions lie at residues 13–74 and 706–732; these read KNKG…NSAA and LGRNAGPSKSWADQVEEAENEEEKQKE. A compositionally biased stretch (acidic residues) spans 719 to 732; it reads QVEEAENEEEKQKE.

The polypeptide is Non-structural protein 4 (Catharanthus roseus (Madagascar periwinkle)).